The following is a 312-amino-acid chain: Aspartate carbamoyltransferase catalytic subunit (312 aa).

The carbamoyl phosphate site is built by Arg54 and Thr55. L-aspartate is bound at residue Lys83. Carbamoyl phosphate contacts are provided by Arg104, His132, and Gln135. Arg165 and Arg226 together coordinate L-aspartate. Residues Leu263 and Pro264 each coordinate carbamoyl phosphate.

The protein belongs to the aspartate/ornithine carbamoyltransferase superfamily. ATCase family. In terms of assembly, heterooligomer of catalytic and regulatory chains.

It catalyses the reaction carbamoyl phosphate + L-aspartate = N-carbamoyl-L-aspartate + phosphate + H(+). It functions in the pathway pyrimidine metabolism; UMP biosynthesis via de novo pathway; (S)-dihydroorotate from bicarbonate: step 2/3. Functionally, catalyzes the condensation of carbamoyl phosphate and aspartate to form carbamoyl aspartate and inorganic phosphate, the committed step in the de novo pyrimidine nucleotide biosynthesis pathway. In Methanothermobacter thermautotrophicus (strain ATCC 29096 / DSM 1053 / JCM 10044 / NBRC 100330 / Delta H) (Methanobacterium thermoautotrophicum), this protein is Aspartate carbamoyltransferase catalytic subunit.